The sequence spans 721 residues: MGAFRWLSIAAAASTALALTPEQLITAPRRSEAIPDPSGKVAVFSTSQYSFETHKRTSWWSLLDLKTGQTKVLTNDSSVSEIVWLSDDSILYVNSTNADIPGGVELWVTQASSFAKGYKAASLPASFSGLKTAKTKSGDIRFVAYGQSYPNGTAYNEELATAPLSSARIYDSIYVRHWDYWLSTTFNAVFSGTLKKGHGKNGYSLDGELKNLVSPVKNAESPYPPFGGASDYDLSPDGKWVAFKSKAPELPKANFTTSYIYLVPHDASETARPINGPDSPGTPKGIKGDSSSPVFSPNGDKLAYFQMRDETYESDRRVLYVYSLGSKKTIPSVAGDWDRSPDSVKWTPDGKTLIVGSEDLGRTRLFSLPANAKDDYKPKNFTDGGSASAYYFLPDSSLLVTGSALWTNWNVYTAKPEKGVIKKIASANEIDPELKGLGPSDISEFYFQGNFTDIHAWVIYPENFDKSKKYPLIFFIHGGPQGNWADGWSTRWNPKAWADQGYVVVAPNPTGSTGFGQALTDAIQNNWGGAPYDDLVKCWEYVHENLDYVDTDHGVAAGASYGGFMINWIQGSPLGRKFKALVSHDGTFVADAKVSTEELWFMQREFNGTFWDARDNYRRWDPSAPERILQFATPMLVIHSDKDYRLPVAEGLSLFNVLQERGVPSRFLNFPDENHWVVNPENSLVWHQQALGWINKYSGVEKSNPNAVSLEDTVVPVVNYN.

A signal peptide spans 1-18 (MGAFRWLSIAAAASTALA). 4 N-linked (GlcNAc...) asparagine glycosylation sites follow: Asn-75, Asn-94, Asn-151, and Asn-254. Residues 271 to 297 (ARPINGPDSPGTPKGIKGDSSSPVFSP) form a disordered region. N-linked (GlcNAc...) asparagine glycans are attached at residues Asn-380 and Asn-450. The active-site Charge relay system is Ser-560. Asn-607 is a glycosylation site (N-linked (GlcNAc...) asparagine). Residues Asp-643 and His-675 each act as charge relay system in the active site.

The protein belongs to the peptidase S9C family. In terms of processing, N-glycosylated. In terms of tissue distribution, expressed in mycelia and conidia.

Its subcellular location is the secreted. In terms of biological role, may be involved in metabolism of dipeptides or may affect host defense mechanisms. Has a substrate specificity limited to the hydrolysis of X-Ala, His-Ser, and Ser-Tyr dipeptides at a neutral pH optimum. This Aspergillus fumigatus (strain ATCC MYA-4609 / CBS 101355 / FGSC A1100 / Af293) (Neosartorya fumigata) protein is Dipeptidyl-peptidase 5.